Reading from the N-terminus, the 1410-residue chain is SNF2 domain-containing protein CLASSY 3 (1410 aa).

The segment covering 1–12 (MECIGKRVKSRS) has biased composition (basic residues). 6 disordered regions span residues 1-74 (MECI…SVPN), 87-108 (DLNV…SEQN), 209-330 (GEIE…PIKR), 344-376 (RSGS…QREV), 428-593 (NVSK…LKDK), and 632-654 (EDEA…REDH). A Nuclear localization signal 1 motif is present at residues 22 to 29 (RKKMETVA). The span at 95–108 (GPSSSRLTDGSEQN) shows a compositional bias: polar residues. Acidic residues predominate over residues 245–266 (SDGEDSSSETDEEEEENQDSED). Positions 248 to 278 (EDSSSETDEEEEENQDSEDNNTKDNVTVESL) form a coiled coil. The span at 276–301 (ESLSSEDPSSSSSSSSSSSSSSSSSS) shows a compositional bias: low complexity. Residues 306–323 (SYVKEVVGDNRDDDDLRK) are compositionally biased toward basic and acidic residues. The short motif at 328–335 (IKRVSLVE) is the Nuclear localization signal 2 element. The span at 351 to 376 (KPRERDNKIQKLNHREEEKKERQREV) shows a compositional bias: basic and acidic residues. A coiled-coil region spans residues 356 to 377 (DNKIQKLNHREEEKKERQREVV). Over residues 428 to 446 (NVSKYEDSVSINSGKTTGA) the composition is skewed to polar residues. Composition is skewed to basic and acidic residues over residues 450–463 (PEVE…ELNT) and 488–504 (EPSR…KEVQ). Low complexity predominate over residues 576–587 (SSISSGDGYESD). Residues 850 to 1060 (FENSDETGGC…CNVLGLARPK (211 aa)) form the Helicase ATP-binding domain. Residue 863–870 (HAPGTGKT) coordinates ATP. The DEAH box signature appears at 1011–1014 (DEAH). A Nuclear localization signal 3 motif is present at residues 1132 to 1139 (QRRVLESI). A Helicase C-terminal domain is found at 1206–1359 (EFVELCEVIK…ELVFACSSRH (154 aa)).

It belongs to the SNF2/RAD54 helicase family. Interacts with NRPD1.

Its subcellular location is the nucleus. Its function is as follows. Probable chromatin remodeling factor. In Arabidopsis thaliana (Mouse-ear cress), this protein is SNF2 domain-containing protein CLASSY 3 (CLSY3).